Reading from the N-terminus, the 431-residue chain is Tyrosine--tRNA ligase (431 aa).

L-tyrosine is bound at residue Y34. The 'HIGH' region motif lies at 39–48 (PTADSLHIGH). L-tyrosine-binding residues include Y171 and Q175. The 'KMSKS' region signature appears at 231–235 (KFGKT). ATP is bound at residue K234. The 70-residue stretch at 353–422 (INVVEALVKT…GKYTILRRGK (70 aa)) folds into the S4 RNA-binding domain.

This sequence belongs to the class-I aminoacyl-tRNA synthetase family. TyrS type 1 subfamily. As to quaternary structure, homodimer.

Its subcellular location is the cytoplasm. The catalysed reaction is tRNA(Tyr) + L-tyrosine + ATP = L-tyrosyl-tRNA(Tyr) + AMP + diphosphate + H(+). Functionally, catalyzes the attachment of tyrosine to tRNA(Tyr) in a two-step reaction: tyrosine is first activated by ATP to form Tyr-AMP and then transferred to the acceptor end of tRNA(Tyr). This is Tyrosine--tRNA ligase from Neisseria meningitidis serogroup C (strain 053442).